A 309-amino-acid polypeptide reads, in one-letter code: MKITILSGGTGTPKLIQGFKEILPNEDISVIVNTGEDTYIGDIYLSPDIDTVLYTFSDLINDETWYGLKGDTFFCHEQLKNFGFDEVLKIGDKDRALKMHKASSLKNGVKMSEIVDIERKSLLINSKIYPMSNEKVESKVLIEENNEKILLKFHDFWIFRKGNAKVLDIFYENSNYAKAANGVLKAIHESDFVLIGPSNPITSIGPILSISEIKNALKEKLVFAVSPIVGENPVSGPAGTLMNAKGYPVSAVGVYEYYKDIVDVLVLDNSDINKKKDINCEVLYANTIMKTIDDKINLARNILDYYKSR.

7,8-didemethyl-8-hydroxy-5-deazariboflavin is bound by residues D50 and K89.

It belongs to the CofD family. Homodimer. Requires Mg(2+) as cofactor.

The enzyme catalyses (2S)-lactyl-2-diphospho-5'-guanosine + 7,8-didemethyl-8-hydroxy-5-deazariboflavin = oxidized coenzyme F420-0 + GMP + H(+). The protein operates within cofactor biosynthesis; coenzyme F420 biosynthesis. Functionally, catalyzes the transfer of the 2-phospholactate moiety from (2S)-lactyl-2-diphospho-5'-guanosine to 7,8-didemethyl-8-hydroxy-5-deazariboflavin (FO) with the formation of oxidized coenzyme F420-0 and GMP. The protein is 2-phospho-L-lactate transferase of Methanococcus maripaludis (strain C7 / ATCC BAA-1331).